We begin with the raw amino-acid sequence, 559 residues long: MDKPRHERQWAHGADLIVSQLEAQGVRQVFGIPGAKIDKVFDSLLDSSIRIIPVRHEANAAFMAAAVGRITGKAGVALVTSGPGCSNLITGMATANSEGDPVVALGGAVKRADKAKLVHQSMDTVAMFSPVTKYAVEVTASDALAEVVSNAFRAAEQGRPGSAFVSLPQDIVDGPASGSTLPASRAPQMGAAPDGAVDSVAQAIAAAKNPIFLLGLMASQPENSRALHRHAGKKPYSGHQHLSGAGAVNQDNFARFAGRVGLFNNQAGDRLLRQADLIICIGYSPVEYEPAMWNSGTATLVHIDVLPAYEERNYVPDIELVGDIAATLEKLAQRIEHRLVLTPQAADILADRQRQRELLDRRGAQLNQFALHPLRIVRAMQDIVNSDVTLTVDMGSFHIWIARYLYSFRARQVMISNGQQTMGVALPWAIGAWLVNPQRKVVSVSGDGGFLQSSMELETAVRLHANILHIIWVDNGYNMVAIQEQKKYQRLSGVEFGPVDFKVYAEAFGACGFAVESAEALEPTLRAAMDVDGPAVVAIPVDYRDNPLLMGQLHLSQIL.

FAD contacts are provided by residues Arg159, 263 to 284, and 304 to 323; these read FNNQ…IGYS and DVLP…LVGD. Asp447 provides a ligand contact to Mg(2+).

The protein belongs to the TPP enzyme family. Homodimer.

The catalysed reaction is 2 pyruvate + H(+) = (2S)-2-acetolactate + CO2. It participates in polyol metabolism; (R,R)-butane-2,3-diol biosynthesis; (R,R)-butane-2,3-diol from pyruvate: step 1/3. The sequence is that of Acetolactate synthase, catabolic (budB) from Raoultella terrigena (Klebsiella terrigena).